Consider the following 130-residue polypeptide: Small ribosomal subunit protein uS9 (130 aa).

It belongs to the universal ribosomal protein uS9 family.

The protein is Small ribosomal subunit protein uS9 of Vibrio campbellii (strain ATCC BAA-1116).